A 326-amino-acid polypeptide reads, in one-letter code: Organic solute transporter subunit alpha (326 aa).

The Extracellular segment spans residues 1-28; it reads METSNFTLFDPRCRAEAPFAIDAIKQLD. Asparagine 5 carries N-linked (GlcNAc...) asparagine glycosylation. Residues 29-49 traverse the membrane as a helical segment; it reads IFGKVLYTVLTLMATASMLVF. The Cytoplasmic portion of the chain corresponds to 50 to 67; sequence IEECIYIYKKVPAHKKST. Residues 68-88 form a helical membrane-spanning segment; the sequence is IIWVTGVAPVMAIMSCLGMWV. The Extracellular segment spans residues 89-99; it reads PRATMFTDMTS. The chain crosses the membrane as a helical span at residues 100–120; sequence ATYFAIVVFKFLILMIEEVGG. Residues 121-161 are Cytoplasmic-facing; it reads DNAFLRRCEKQTFKISTGPCCCCCPCLPNVPITRRSLFILK. The helical transmembrane segment at 162 to 182 threads the bilayer; that stretch reads LGSYQFALMKLVLTIFSIVLW. Residues 183–198 are Extracellular-facing; that stretch reads TNGSFSLTNVSASGAA. 2 N-linked (GlcNAc...) asparagine glycosylation sites follow: asparagine 184 and asparagine 191. A helical membrane pass occupies residues 199–219; the sequence is IWINSFIGVLTIIALWPVAIM. The Cytoplasmic segment spans residues 220–237; it reads FMHVREALRTLKIVPKYA. A helical membrane pass occupies residues 238 to 258; sequence MYQLVLILSQLQTAIINILAL. A glycan (N-linked (GlcNAc...) asparagine) is linked at asparagine 259. The Extracellular segment spans residues 259-275; that stretch reads NGTIACSPPYSSQARGY. The helical transmembrane segment at 276-296 threads the bilayer; that stretch reads MMSQQLLIVEMFIITLVTRVL. Over 297 to 326 the chain is Cytoplasmic; the sequence is YRRQYEPIPEPDDVEEKKTVLSSKKAIDVA.

Belongs to the OST-alpha family. As to quaternary structure, interacts with slc51b. The Ost-alpha/Ost-beta complex is a heterodimer composed of alpha (slc51a) and beta (slc51b) subunit.

The protein localises to the cell membrane. The protein resides in the endoplasmic reticulum membrane. The enzyme catalyses taurocholate(out) = taurocholate(in). It carries out the reaction prostaglandin E2(out) = prostaglandin E2(in). It catalyses the reaction estrone 3-sulfate(out) = estrone 3-sulfate(in). The catalysed reaction is dehydroepiandrosterone 3-sulfate(out) = dehydroepiandrosterone 3-sulfate(in). The enzyme catalyses tauroursodeoxycholate(out) = tauroursodeoxycholate(in). It carries out the reaction glycoursodeoxycholate(out) = glycoursodeoxycholate(in). It catalyses the reaction glycocholate(out) = glycocholate(in). The catalysed reaction is taurochenodeoxycholate(out) = taurochenodeoxycholate(in). The enzyme catalyses glycochenodeoxycholate(out) = glycochenodeoxycholate(in). It carries out the reaction taurodeoxycholate(out) = taurodeoxycholate(in). It catalyses the reaction glycodeoxycholate(out) = glycodeoxycholate(in). Essential component of the Ost-alpha/Ost-beta complex, a heterodimer that acts as the intestinal basolateral transporter responsible for the translocation of bile acids (such as taurocholate), steroids (such as estrone sulfate), and eicosanoids (such as prostaglandin E2). The protein is Organic solute transporter subunit alpha (slc51a) of Danio rerio (Zebrafish).